We begin with the raw amino-acid sequence, 513 residues long: Ribonuclease Y (513 aa).

Residues 4-24 (TTSLIIAILAGILGIVIGFFF) traverse the membrane as a helical segment. The disordered stretch occupies residues 78–106 (KSRLKEISRQEDRLNSKEENLERKNASLE). A KH domain is found at 203 to 288 (TVSVVNLPND…EMVEKARKDV (86 aa)). The region spanning 329–422 (VLKHSIEVSN…VQSADAISAA (94 aa)) is the HD domain.

The protein belongs to the RNase Y family.

It localises to the cell membrane. Functionally, endoribonuclease that initiates mRNA decay. The polypeptide is Ribonuclease Y (Finegoldia magna (strain ATCC 29328 / DSM 20472 / WAL 2508) (Peptostreptococcus magnus)).